Consider the following 677-residue polypeptide: Probable sulfate transporter 4.2 (677 aa).

Topologically, residues 1-83 are cytoplasmic; that stretch reads MSLAVKDLST…RTYRWHQYFK (83 aa). Residues 84 to 104 traverse the membrane as a helical segment; the sequence is LDLMAGITVGIMLVPQAMSYA. The Extracellular portion of the chain corresponds to 105-108; the sequence is RLAG. The chain crosses the membrane as a helical span at residues 109 to 129; that stretch reads LQPIYGLYSSFVPVFVYAVFG. Over 130–133 the chain is Cytoplasmic; sequence SSRQ. The helical transmembrane segment at 134–154 threads the bilayer; sequence LAVGPVALVSLLVSNALSGIV. Residues 155-161 lie on the Extracellular side of the membrane; that stretch reads DPSEELY. A helical transmembrane segment spans residues 162–182; it reads TELAILLALMVGIFESIMGFL. Over 183–189 the chain is Cytoplasmic; it reads RLGWLIR. Residues 190–210 form a helical membrane-spanning segment; the sequence is FISHSVISGFTTASAVVIGLS. Residues 211 to 241 lie on the Extracellular side of the membrane; that stretch reads QLKYFLGYSVSRSSKIMPVIDSIIAGADQFK. The chain crosses the membrane as a helical span at residues 242–262; sequence WPPFLLGCTILVILLVMKHVG. Over 263 to 269 the chain is Cytoplasmic; sequence KAKKELR. The helical transmembrane segment at 270–290 threads the bilayer; it reads FIRAAGPLTGLALGTIIAKVF. At 291-318 the chain is on the extracellular side; the sequence is HPPSITLVGDIPQGLPKFSFPKSFDHAK. Residues 319–339 form a helical membrane-spanning segment; sequence LLLPTSALITGVAILESVGIA. The Cytoplasmic segment spans residues 340–355; that stretch reads KALAAKNRYELDSNSE. The chain crosses the membrane as a helical span at residues 356 to 376; sequence LFGLGVANIFGSLFSAYPTTG. Over 377–392 the chain is Extracellular; sequence SFSRSAVNSESEAKTG. The helical transmembrane segment at 393-413 threads the bilayer; the sequence is LSGLVTGIIIGCSLLFLTPMF. At 414–420 the chain is on the cytoplasmic side; sequence KFIPQCA. Residues 421 to 441 traverse the membrane as a helical segment; the sequence is LAAIVISAVSGLVDYEGAIFL. The Extracellular portion of the chain corresponds to 442 to 459; that stretch reads WRVDKRDFTLWTITSTTT. The chain crosses the membrane as a helical span at residues 460–480; the sequence is LFFGIEIGVLIGVGFSLAFVI. Over 481-677 the chain is Cytoplasmic; that stretch reads HESANPHIAV…LEEPLLSREK (197 aa). The region spanning 505 to 629 is the STAS domain; sequence QYPEAYTYNG…VRVHDAVQVC (125 aa).

It belongs to the SLC26A/SulP transporter (TC 2.A.53) family.

It is found in the membrane. Functionally, h(+)/sulfate cotransporter that may play a role in the regulation of sulfate assimilation. The protein is Probable sulfate transporter 4.2 (SULTR4;2) of Arabidopsis thaliana (Mouse-ear cress).